The chain runs to 105 residues: Large ribosomal subunit protein uL24 (105 aa).

Belongs to the universal ribosomal protein uL24 family. In terms of assembly, part of the 50S ribosomal subunit.

Functionally, one of two assembly initiator proteins, it binds directly to the 5'-end of the 23S rRNA, where it nucleates assembly of the 50S subunit. One of the proteins that surrounds the polypeptide exit tunnel on the outside of the subunit. This is Large ribosomal subunit protein uL24 from Tolumonas auensis (strain DSM 9187 / NBRC 110442 / TA 4).